A 352-amino-acid chain; its full sequence is Histidine biosynthesis bifunctional protein HisB (352 aa).

The interval methionine 1–phenylalanine 164 is histidinol-phosphatase. The Nucleophile role is filled by aspartate 9. Mg(2+)-binding residues include aspartate 9 and aspartate 11. The Proton donor role is filled by aspartate 11. 4 residues coordinate Zn(2+): cysteine 93, histidine 95, cysteine 101, and cysteine 103. Aspartate 130 contacts Mg(2+). Residues arginine 165–isoleucine 352 are imidazoleglycerol-phosphate dehydratase.

The protein in the N-terminal section; belongs to the histidinol-phosphatase family. In the C-terminal section; belongs to the imidazoleglycerol-phosphate dehydratase family. Mg(2+) is required as a cofactor. Requires Zn(2+) as cofactor.

It is found in the cytoplasm. The enzyme catalyses D-erythro-1-(imidazol-4-yl)glycerol 3-phosphate = 3-(imidazol-4-yl)-2-oxopropyl phosphate + H2O. It carries out the reaction L-histidinol phosphate + H2O = L-histidinol + phosphate. It functions in the pathway amino-acid biosynthesis; L-histidine biosynthesis; L-histidine from 5-phospho-alpha-D-ribose 1-diphosphate: step 6/9. The protein operates within amino-acid biosynthesis; L-histidine biosynthesis; L-histidine from 5-phospho-alpha-D-ribose 1-diphosphate: step 8/9. In Campylobacter jejuni subsp. jejuni serotype O:6 (strain 81116 / NCTC 11828), this protein is Histidine biosynthesis bifunctional protein HisB.